The sequence spans 227 residues: ATP-dependent dethiobiotin synthetase BioD (227 aa).

Residue 13–18 (NIGKTV) participates in ATP binding. T17 is a Mg(2+) binding site. K38 is an active-site residue. ATP contacts are provided by residues D55 and 116-119 (EGIG). Mg(2+)-binding residues include D55 and E116.

The protein belongs to the dethiobiotin synthetase family. Homodimer. It depends on Mg(2+) as a cofactor.

It is found in the cytoplasm. The catalysed reaction is (7R,8S)-7,8-diammoniononanoate + CO2 + ATP = (4R,5S)-dethiobiotin + ADP + phosphate + 3 H(+). Its pathway is cofactor biosynthesis; biotin biosynthesis; biotin from 7,8-diaminononanoate: step 1/2. In terms of biological role, catalyzes a mechanistically unusual reaction, the ATP-dependent insertion of CO2 between the N7 and N8 nitrogen atoms of 7,8-diaminopelargonic acid (DAPA, also called 7,8-diammoniononanoate) to form a ureido ring. The protein is ATP-dependent dethiobiotin synthetase BioD of Buchnera aphidicola subsp. Baizongia pistaciae (strain Bp).